The chain runs to 212 residues: uncharacterized protein (212 aa).

A helical transmembrane segment spans residues 186-206; the sequence is VITLISFMLFSILFFLIFLIV.

It localises to the membrane. This is an uncharacterized protein from Mycoplasma genitalium (strain ATCC 33530 / DSM 19775 / NCTC 10195 / G37) (Mycoplasmoides genitalium).